We begin with the raw amino-acid sequence, 206 residues long: ATP-dependent Clp protease proteolytic subunit 1 (206 aa).

S103 serves as the catalytic Nucleophile. The active site involves H128.

It belongs to the peptidase S14 family. In terms of assembly, fourteen ClpP subunits assemble into 2 heptameric rings which stack back to back to give a disk-like structure with a central cavity, resembling the structure of eukaryotic proteasomes.

It is found in the cytoplasm. It catalyses the reaction Hydrolysis of proteins to small peptides in the presence of ATP and magnesium. alpha-casein is the usual test substrate. In the absence of ATP, only oligopeptides shorter than five residues are hydrolyzed (such as succinyl-Leu-Tyr-|-NHMec, and Leu-Tyr-Leu-|-Tyr-Trp, in which cleavage of the -Tyr-|-Leu- and -Tyr-|-Trp bonds also occurs).. Cleaves peptides in various proteins in a process that requires ATP hydrolysis. Has a chymotrypsin-like activity. Plays a major role in the degradation of misfolded proteins. The chain is ATP-dependent Clp protease proteolytic subunit 1 from Protochlamydia amoebophila (strain UWE25).